A 481-amino-acid chain; its full sequence is Glutamyl-tRNA(Gln) amidotransferase subunit A (481 aa).

Catalysis depends on charge relay system residues lysine 76 and serine 151. Serine 175 serves as the catalytic Acyl-ester intermediate.

This sequence belongs to the amidase family. GatA subfamily. In terms of assembly, heterotrimer of A, B and C subunits.

The enzyme catalyses L-glutamyl-tRNA(Gln) + L-glutamine + ATP + H2O = L-glutaminyl-tRNA(Gln) + L-glutamate + ADP + phosphate + H(+). Functionally, allows the formation of correctly charged Gln-tRNA(Gln) through the transamidation of misacylated Glu-tRNA(Gln) in organisms which lack glutaminyl-tRNA synthetase. The reaction takes place in the presence of glutamine and ATP through an activated gamma-phospho-Glu-tRNA(Gln). The sequence is that of Glutamyl-tRNA(Gln) amidotransferase subunit A from Neisseria meningitidis serogroup C / serotype 2a (strain ATCC 700532 / DSM 15464 / FAM18).